Here is an 80-residue protein sequence, read N- to C-terminus: UPF0270 protein AHA_0994 (80 aa).

The protein belongs to the UPF0270 family.

This chain is UPF0270 protein AHA_0994, found in Aeromonas hydrophila subsp. hydrophila (strain ATCC 7966 / DSM 30187 / BCRC 13018 / CCUG 14551 / JCM 1027 / KCTC 2358 / NCIMB 9240 / NCTC 8049).